Here is a 1056-residue protein sequence, read N- to C-terminus: PH and SEC7 domain-containing protein 4 (1056 aa).

The span at 25–42 (LEPHPGECPRETCSHEDP) shows a compositional bias: basic and acidic residues. Disordered regions lie at residues 25-71 (LEPH…SGVE), 87-149 (CQEQ…QNRS), 195-239 (LPGD…QWGA), 340-362 (GAPA…APSA), 388-533 (VQPW…GDVQ), and 546-581 (LRTP…LANG). Composition is skewed to polar residues over residues 88-99 (QEQTRATDPPES) and 128-137 (NTASPGSPVN). Residues Ser131, Ser134, and Ser143 each carry the phosphoserine modification. Over residues 207–220 (ENEDSGEDSSEPEG) the composition is skewed to acidic residues. A Phosphoserine modification is found at Ser413. Over residues 414 to 423 (QDRDEREGGH) the composition is skewed to basic and acidic residues. Over residues 438–456 (RSPASSPEPSSPESESRGP) the composition is skewed to low complexity. 3 positions are modified to phosphoserine: Ser448, Ser469, and Ser491. Polar residues-rich tracts occupy residues 466 to 476 (QEGSPQLQHHS) and 486 to 502 (DASQ…QPSS). The segment covering 504 to 522 (KKKEAGEAPKPGEEVKSEG) has biased composition (basic and acidic residues). The SEC7 domain occupies 544–736 (ENLRTPMNSS…KALYWSIRSE (193 aa)). A compositionally biased stretch (polar residues) spans 548 to 567 (TPMNSSWLPGSPMPQAQSPE). The 117-residue stretch at 776-892 (PTYKQGILAR…WIARINLAAA (117 aa)) folds into the PH domain. Residues 921–976 (SSLEEQHRSHENCLDAAADDLLDLQRNLPERRGRGRELEEHRLRKEYLEYEKTRYE) adopt a coiled-coil conformation. Residues 1004–1056 (AGGTREPKLSLKKSHSSPSLHQDEAPTTAKVKRNISERRTYRKIIPKRNRNQL) are disordered. A phosphoserine mark is found at Ser1019 and Ser1022. Basic residues predominate over residues 1043–1056 (TYRKIIPKRNRNQL).

As to expression, widely expressed. Highest levels of expression are found in placenta, pancreas, spleen, thymus and peripheral blood.

The protein localises to the cell membrane. It localises to the cell projection. The protein resides in the ruffle membrane. Functionally, guanine nucleotide exchange factor for ARF6 and ARL14/ARF7. Through ARL14 activation, controls the movement of MHC class II-containing vesicles along the actin cytoskeleton in dendritic cells. Involved in membrane recycling. Interacts with several phosphatidylinositol phosphate species, including phosphatidylinositol 3,4-bisphosphate, phosphatidylinositol 3,5-bisphosphate and phosphatidylinositol 4,5-bisphosphate. The protein is PH and SEC7 domain-containing protein 4 (PSD4) of Homo sapiens (Human).